The following is a 182-amino-acid chain: UPF0316 protein BCG9842_B1857 (182 aa).

3 consecutive transmembrane segments (helical) span residues 6–26, 32–52, and 58–78; these read LIFV…ILLV, SAAG…GIVF, and WMNI…GGYI.

This sequence belongs to the UPF0316 family.

The protein localises to the cell membrane. This chain is UPF0316 protein BCG9842_B1857, found in Bacillus cereus (strain G9842).